We begin with the raw amino-acid sequence, 580 residues long: Phosphatase and actin regulator 1 (580 aa).

2 positions are modified to phosphoserine: Ser-67 and Ser-78. Thr-104 is subject to Phosphothreonine. The short motif at 108 to 129 is the Nuclear localization signal element; it reads RRRSKFANLGRIFKPWKWRKKK. Residues 138 to 163 form an RPEL 1 repeat; that stretch reads AALERKISMRQSREELIKRGVLKEIY. 2 disordered regions span residues 330–350 and 374–408; these read SEQRVPCSTSYHSSGLHSSDG and DNKENVPHEPDYEDSPCLYGREEEEEEEDEDDDAS. A compositionally biased stretch (low complexity) spans 337–348; it reads STSYHSSGLHSS. Residues 374-383 are compositionally biased toward basic and acidic residues; it reads DNKENVPHEP. The span at 395 to 407 shows a compositional bias: acidic residues; it reads EEEEEEEDEDDDA. RPEL repeat units lie at residues 422–447, 460–485, and 498–523; these read DSLAIKLSNRPSKRELEEKNILPRQT, TKLTRRLSQRPTAEELEQRNILKPRN, and RRLTRKLSQRPTVEELRERKILIRFS. The tract at residues 463–494 is disordered; the sequence is TRRLSQRPTAEELEQRNILKPRNEQEEQEEKR. Position 467 is a phosphoserine (Ser-467). The span at 471–494 shows a compositional bias: basic and acidic residues; sequence TAEELEQRNILKPRNEQEEQEEKR. At Ser-505 the chain carries Phosphoserine.

It belongs to the phosphatase and actin regulator family. As to quaternary structure, interacts (via RPEL repeats) with ACTA1 and PPP1CA; ACTA1 and PPP1CA compete for the same binding site.

It is found in the cytoplasm. It localises to the synapse. The protein localises to the nucleus. Binds actin monomers (G actin) and plays a role in multiple processes including the regulation of actin cytoskeleton dynamics, actin stress fibers formation, cell motility and survival, formation of tubules by endothelial cells, and regulation of PPP1CA activity. Involved in the regulation of cortical neuron migration and dendrite arborization. The protein is Phosphatase and actin regulator 1 (Phactr1) of Mus musculus (Mouse).